A 606-amino-acid polypeptide reads, in one-letter code: Threonine dehydratase 1 biosynthetic, chloroplastic (606 aa).

Lys154 is modified (N6-(pyridoxal phosphate)lysine). 2 consecutive ACT-like domains span residues 432–504 (AVLA…NLTD) and 526–597 (LLCR…MESL).

The protein belongs to the serine/threonine dehydratase family. Requires pyridoxal 5'-phosphate as cofactor. In terms of tissue distribution, expressed constitutively in all tissues examined including root, stem, petiole, leaf, immature flower bud, unopened flower and opened flower with the highest expression in opened flower and lowest in leaf.

The protein localises to the plastid. It is found in the chloroplast. It catalyses the reaction L-threonine = 2-oxobutanoate + NH4(+). It participates in amino-acid biosynthesis; L-isoleucine biosynthesis; 2-oxobutanoate from L-threonine: step 1/1. With respect to regulation, strongly inhibited by 1 mM isoleucine. Has a housekeeping role in isoleucine biosynthesis. The chain is Threonine dehydratase 1 biosynthetic, chloroplastic from Solanum lycopersicum (Tomato).